We begin with the raw amino-acid sequence, 2192 residues long: Non-reducing polyketide synthase 1 (2192 aa).

The N-terminal acylcarrier protein transacylase domain (SAT) stretch occupies residues 5 to 243; it reads LLLGDQTADQ…VSIPIYAPYH (239 aa). A Ketosynthase family 3 (KS3) domain is found at 374–806; sequence NDKIAIVGMS…GGNTSLLLED (433 aa). Residues cysteine 546, histidine 681, and histidine 724 each act as for beta-ketoacyl synthase activity in the active site. The malonyl-CoA:ACP transacylase (MAT) domain stretch occupies residues 905–1218; it reads FCFTGQGSQY…ANSMCALFLA (314 aa). Serine 993 serves as the catalytic For acyl/malonyl transferase activity. The segment at 1293 to 1610 is product template (PT) domain; that stretch reads SCQKIIDEEF…RKVLNTFLPP (318 aa). Positions 1295–1430 are N-terminal hotdog fold; the sequence is QKIIDEEFSA…CTVKFEDINT (136 aa). One can recognise a PKS/mFAS DH domain in the interval 1295–1605; it reads QKIIDEEFSA…FQKIPRKVLN (311 aa). Histidine 1327 acts as the Proton acceptor; for dehydratase activity in catalysis. The interval 1458–1605 is C-terminal hotdog fold; that stretch reads AHVIGRGLAY…FQKIPRKVLN (148 aa). Aspartate 1518 serves as the catalytic Proton donor; for dehydratase activity. Residues 1639-1668 form a disordered region; sequence TQAQPAKAVPKQVTVAAPTPKAAPKKADLK. In terms of domain architecture, Carrier 1 spans 1670–1747; it reads PAGPTIITRV…EMKKFFSQYD (78 aa). Residue serine 1707 is modified to O-(pantetheine 4'-phosphoryl)serine. Residues 1748-1788 are disordered; that stretch reads GEVGTPEQDDSDSDSETSGDASTPMSEVGTPMTIPSSAVSE. A compositionally biased stretch (acidic residues) spans 1754–1764; it reads EQDDSDSDSET. The Carrier 2 domain maps to 1798-1875; sequence APASGEVSIA…DVENALDMRP (78 aa). Serine 1835 carries the O-(pantetheine 4'-phosphoryl)serine modification. The interval 1913 to 2164 is thioesterase (TE) domain; it reads SKYPAATSVL…SMMKPPHVSI (252 aa).

In terms of biological role, non-reducing polyketide synthase; part of the gene cluster that mediates the biosynthesis of elsinochromes, pigments consisting of at least four interconvertible tautomers (A, B, C and D) that have a core phenolic quinone to which various side chains are attached and which play an important role in fungal pathogenesis. The non-reducing polyketide synthase PKS1 was proposed to iteratively catalyze decarboxylation between acetyl-CoA and malonyl-CoA subunits for polyketide chain elongation. The released polyketide undergoes cyclization to form an aromatic ring, and proceeds via serial modification steps to produce the heptaketide back- bone of elsinochrome. As elsinochrome has a symmetrical structure, two identical heptaketides are fused to form a core 1,2-dihydrobenzo-perylene ring structure, which can then be successively modified to produce the various derivatives of elsinochrome. Some of these reactions may be cooperatively carried out, at least in part, by the products of RDT1, OXR1 and PKS1. PRF1, embedded within the elsinochrome cluster possibly functions to stabilize some of the biosynthetic enzymes required for elsinochrome production. As prefoldin is a hexamer containing 2 a and 4 b subunits, additional prefoldin subunits, whose coding genes may not immediately link to the elsinochrome biosynthetic gene cluster, are required to fulfill the chaperone function. In addition, no methyltransferase-coding gene exists within the biosynthetic gene cluster, even though elsinochrome has four methyl groups at positions C3, C7, C8 and C12. Apparently, the identified gene cluster does not contain the entire entourage of genes responsible for elsinochrome biosynthesis. Once elsinochrome is synthesized, it must be exported outside the fungal cells, which is probably accomplished by the ECT1 transporter, to avoid toxicity. This Elsinoe fawcettii (Citrus scab fungus) protein is Non-reducing polyketide synthase 1.